A 124-amino-acid polypeptide reads, in one-letter code: Large ribosomal subunit protein uL18 (124 aa).

Belongs to the universal ribosomal protein uL18 family. As to quaternary structure, part of the 50S ribosomal subunit; part of the 5S rRNA/L5/L18/L25 subcomplex. Contacts the 5S and 23S rRNAs.

This is one of the proteins that bind and probably mediate the attachment of the 5S RNA into the large ribosomal subunit, where it forms part of the central protuberance. The chain is Large ribosomal subunit protein uL18 from Aquifex pyrophilus.